The following is a 199-amino-acid chain: NADH-ubiquinone oxidoreductase chain 6 (199 aa).

5 helical membrane-spanning segments follow: residues 1-21 (MILF…VIRA), 27-47 (SVLF…LLGL), 49-69 (FFAM…FLFV), 87-107 (YLPV…LMVD), and 150-170 (FFLF…AIVL).

This sequence belongs to the complex I subunit 6 family.

The protein localises to the mitochondrion membrane. It catalyses the reaction a ubiquinone + NADH + 5 H(+)(in) = a ubiquinol + NAD(+) + 4 H(+)(out). Core subunit of the mitochondrial membrane respiratory chain NADH dehydrogenase (Complex I) that is believed to belong to the minimal assembly required for catalysis. Complex I functions in the transfer of electrons from NADH to the respiratory chain. The immediate electron acceptor for the enzyme is believed to be ubiquinone. The sequence is that of NADH-ubiquinone oxidoreductase chain 6 (ND6) from Marchantia polymorpha (Common liverwort).